Reading from the N-terminus, the 470-residue chain is ATP synthase subunit beta (470 aa).

156 to 163 contacts ATP; it reads GGAGVGKT.

This sequence belongs to the ATPase alpha/beta chains family. F-type ATPases have 2 components, CF(1) - the catalytic core - and CF(0) - the membrane proton channel. CF(1) has five subunits: alpha(3), beta(3), gamma(1), delta(1), epsilon(1). CF(0) has three main subunits: a(1), b(2) and c(9-12). The alpha and beta chains form an alternating ring which encloses part of the gamma chain. CF(1) is attached to CF(0) by a central stalk formed by the gamma and epsilon chains, while a peripheral stalk is formed by the delta and b chains.

Its subcellular location is the cell inner membrane. It catalyses the reaction ATP + H2O + 4 H(+)(in) = ADP + phosphate + 5 H(+)(out). Functionally, produces ATP from ADP in the presence of a proton gradient across the membrane. The catalytic sites are hosted primarily by the beta subunits. This Nitratidesulfovibrio vulgaris (strain ATCC 29579 / DSM 644 / CCUG 34227 / NCIMB 8303 / VKM B-1760 / Hildenborough) (Desulfovibrio vulgaris) protein is ATP synthase subunit beta.